The primary structure comprises 144 residues: Peptide methionine sulfoxide reductase MsrB (144 aa).

The region spanning 6 to 128 is the MsrB domain; the sequence is KDELKKKLTP…NSAALRFIPK (123 aa). Cys-117 (nucleophile) is an active-site residue.

It belongs to the MsrB Met sulfoxide reductase family.

The enzyme catalyses L-methionyl-[protein] + [thioredoxin]-disulfide + H2O = L-methionyl-(R)-S-oxide-[protein] + [thioredoxin]-dithiol. The chain is Peptide methionine sulfoxide reductase MsrB from Shouchella clausii (strain KSM-K16) (Alkalihalobacillus clausii).